A 366-amino-acid chain; its full sequence is Major outer membrane protein (366 aa).

An N-terminal signal peptide occupies residues 1-21 (MKKTLLATAIAGAMAASGAQA).

The protein belongs to the Gram-negative porin family. Homotrimer.

It localises to the cell outer membrane. The polypeptide is Major outer membrane protein (Halomonas elongata (strain ATCC 33173 / DSM 2581 / NBRC 15536 / NCIMB 2198 / 1H9)).